Here is a 402-residue protein sequence, read N- to C-terminus: Type II NADH:quinone oxidoreductase (402 aa).

FAD-binding positions include 12-16 (GAGYA), 39-40 (NK), and valine 83. Residue glutamate 172 is part of the active site. FAD contacts are provided by residues aspartate 302, 319–320 (AQ), and lysine 379.

This sequence belongs to the NADH dehydrogenase family. FAD is required as a cofactor.

It is found in the cell membrane. It catalyses the reaction a quinone + NADH + H(+) = a quinol + NAD(+). In terms of biological role, alternative, nonproton pumping NADH:quinone oxidoreductase that delivers electrons to the respiratory chain by oxidation of NADH and reduction of quinones, and contributes to the regeneration of NAD(+). This Staphylococcus epidermidis (strain ATCC 35984 / DSM 28319 / BCRC 17069 / CCUG 31568 / BM 3577 / RP62A) protein is Type II NADH:quinone oxidoreductase.